The chain runs to 483 residues: MGDDRPFVCNAPGCGQRFTNEDHLAVHKHKHEMTLKFGPARTDSVIIADQTPTPTRFLKNCEEVGLFNELASSFEHEFKKAADEDEKKAAAGPLDMSLPSTPDIKIKEEEPVEVDSSPPDSPASSPCSPPLKEKEVTPKPVLISTPTPTIVRPGSLPLHLGYDPLHPTLPSPTSVITQAPPSNRQMGSPTGSLPLVMHLANGQTMPVLPGPPVQMPSVISLARPVSMVPNIPGIPGPPVNSSGSISPSGHPIPSEAKMRLKATLTHQVSSINGGCGMVVGTASTMVTARPEQSQILIQHPDAPSPAQPQVSPAQPTPSTGGRRRRTVDEDPDERRQRFLERNRAAASRCRQKRKLWVSSLEKKAEELTSQNIQLSNEVTLLRNEVAQLKQLLLAHKDCPVTALQKKTQGYLESPKESSEPTGSPAPVIQHSSATAPSNGLSVRSAAEAVATSVLTQMASQRTELSMPIQSHVIMTPQSQSAGR.

The tract at residues 1 to 285 is transactivation domain; it reads MGDDRPFVCN…GMVVGTASTM (285 aa). A C2H2-type zinc finger spans residues 7-31; the sequence is FVCNAPGCGQRFTNEDHLAVHKHKH. T51 is subject to Phosphothreonine; by MAPK11. 2 positions are modified to phosphothreonine: T53 and T101. Residue K107 forms a Glycyl lysine isopeptide (Lys-Gly) (interchain with G-Cter in SUMO1) linkage. Disordered stretches follow at residues 110-148 and 299-345; these read EPVE…TPTP and HPDA…NRAA. Composition is skewed to low complexity over residues 114–126 and 307–320; these read VDSS…ASSP and QPQV…PSTG. Residues 325-483 form an essential for binding adenovirus 2 E1A region; it reads RTVDEDPDER…MTPQSQSAGR (159 aa). Over residues 326–343 the composition is skewed to basic and acidic residues; sequence TVDEDPDERRQRFLERNR. The bZIP domain maps to 332–395; sequence DERRQRFLER…AQLKQLLLAH (64 aa). The interval 334–354 is basic motif; sequence RRQRFLERNRAAASRCRQKRK. Positions 360–388 are leucine-zipper; the sequence is LEKKAEELTSQNIQLSNEVTLLRNEVAQL. Positions 407-439 are disordered; it reads TQGYLESPKESSEPTGSPAPVIQHSSATAPSNG. Phosphoserine occurs at positions 413 and 423. Residues 429 to 439 are compositionally biased toward polar residues; sequence QHSSATAPSNG.

Belongs to the bZIP family. In terms of assembly, homodimer; binds DNA as homodimer. Heterodimer; heterodimerizes with other members of ATF family and with JUN family members. Interacts with JNK2; the interaction does not phosphorylate ATF7 but acts as a docking site for other ATF-associated partners such as JUN family members. Interacts (via its transactivation domain) with TAF12 (isoforms TAFII15 and TAFII20); the interaction potentiates the transactivation activity (isoform TAFII20 only) and is inhibited by ATF7 sumoylation. Interacts with TAF4; the interaction inhibits the TAF12-dependent transactivation. Interacts with MAPK9; the interaction does not phosphorylate ATF7 but acts as a docking site for ATF7-associated partners such as JUN. Interacts with Ku complex components XRCC6 and XRCC7. Interacts with TERT. (Microbial infection) Interacts with adenovirus 2 E1A; the interaction enhances the ATF7-mediated viral transactivation activity which requires the zinc-binding domains of both E1A and ATF7. In terms of processing, on EGF stimulation, phosphorylated first on Thr-53 allowing subsequent phosphorylation on Thr-51. This latter phosphorylation prevents sumoylation, increases binding to TAF12 and enhances transcriptional activity. Post-translationally, sumoylation delays nuclear localization and inhibits transactivation activity through preventing binding to TAF12. RANBP2 appears to be the specific E3 ligase. On EGF stimulation, phosphorylated first on Thr-53 allowing subsequent phosphorylation on Thr-51. This latter phosphorylation prevents sumoylation, increases binding to TAF12 and enhances transcriptional activity. Social isolation stress as well as TNF-alpha also induce the phosphorylation of ATF7. Phosphorylated in proliferating colonic and small intestinal epithelial cells. Expressed in various tissues including heart, brain, placenta, lung and skeletal muscle. Highest levels in skeletal muscle. Lowest in lung and placenta. As to expression, strongly expressed in skeletal muscle. Also expressed at lower levels in heart and lung.

It localises to the nucleus. The protein localises to the nucleoplasm. Its subcellular location is the chromosome. It is found in the telomere. The protein resides in the cytoplasm. Its function is as follows. Stress-responsive chromatin regulator that plays a role in various biological processes including innate immunological memory, adipocyte differentiation or telomerase regulation. In absence of stress, contributes to the formation of heterochromatin and heterochromatin-like structure by recruiting histone H3K9 tri- and di-methyltransferases thus silencing the transcription of target genes such as STAT1 in adipocytes, or genes involved in innate immunity in macrophages and adipocytes. Stress induces ATF7 phosphorylation that disrupts interactions with histone methyltransferase and enhances the association with coactivators containing histone acetyltransferase and/or histone demethylase, leading to disruption of the heterochromatin-like structure and subsequently transcriptional activation. In response to TNF-alpha, which is induced by various stresses, phosphorylated ATF7 and telomerase are released from telomeres leading to telomere shortening. Also plays a role in maintaining epithelial regenerative capacity and protecting against cell death during intestinal epithelial damage and repair. Acts as a dominant repressor of the E-selectin/NF-ELAM1/delta-A promoter. Functionally, acts as a negative regulator, inhibiting both ATF2 and ATF7 transcriptional activities. It may exert these effects by sequestrating in the cytoplasm the Thr-53 phosphorylating kinase, preventing activation. This Homo sapiens (Human) protein is Cyclic AMP-dependent transcription factor ATF-7 (ATF7).